The chain runs to 271 residues: Shikimate dehydrogenase-like protein HI_0607 (271 aa).

Catalysis depends on Lys-67, which acts as the Proton donor/acceptor. Position 103 (Asp-103) interacts with substrate. NADP(+) is bound by residues Gly-126–Met-130, Lys-154, and Ser-184.

This sequence belongs to the shikimate dehydrogenase-like family. Homodimer.

It catalyses the reaction shikimate + NADP(+) = 3-dehydroshikimate + NADPH + H(+). In vitro, is able to catalyze the NADP(+)-dependent oxidation of shikimate to 3-dehydroshikimate. However, has much lower activity than classical shikimate dehydrogenases AroE, indicating that shikimate may not be the biological substrate. Cannot utilize NAD(+) instead of NADP(+). Is not able to catalyze the oxidation of quinate. In Haemophilus influenzae (strain ATCC 51907 / DSM 11121 / KW20 / Rd), this protein is Shikimate dehydrogenase-like protein HI_0607.